The primary structure comprises 506 residues: Exopolysaccharide phosphotransferase NFA_48680 (506 aa).

A disordered region spans residues 484–506 (PAPWERVSAPSRRPLPESTAGAA).

Belongs to the stealth family.

This is Exopolysaccharide phosphotransferase NFA_48680 from Nocardia farcinica (strain IFM 10152).